We begin with the raw amino-acid sequence, 196 residues long: MELNPGNPIFDYCVLPCFIFLARVTDVSIGTIRVILLTREKKVIAASLGFLEVLLWVIVITQVIKNLNNALCYLAYAGGFAAGTFIGMILEEKLAIGFSLLRIISPRNGDEIANKLSEAGYGVTTMNGQGSRGPVKIVFTVLKRKKIGQAMTIVKSVEPDVFYSIENARSTNTAVSEDSPGLLRIGILEKILKVRK.

3 helical membrane-spanning segments follow: residues 12-32, 44-64, and 70-90; these read YCVLPCFIFLARVTDVSIGTI, IAASLGFLEVLLWVIVITQVI, and ALCYLAYAGGFAAGTFIGMIL.

It belongs to the UPF0316 family.

The protein resides in the cell membrane. In Leptospira borgpetersenii serovar Hardjo-bovis (strain L550), this protein is UPF0316 protein LBL_2483.